The chain runs to 251 residues: Putative deaminase AgaI (251 aa).

The Proton acceptor; for enolization step role is filled by D86. The active-site For ring-opening step is N154. The active-site Proton acceptor; for ring-opening step is the H156. E161 (for ring-opening step) is an active-site residue.

It belongs to the glucosamine/galactosamine-6-phosphate isomerase family.

The protein is Putative deaminase AgaI (agaI) of Escherichia coli (strain K12).